A 101-amino-acid polypeptide reads, in one-letter code: Small ribosomal subunit protein uS14 (101 aa).

Belongs to the universal ribosomal protein uS14 family. Part of the 30S ribosomal subunit. Contacts proteins S3 and S10.

In terms of biological role, binds 16S rRNA, required for the assembly of 30S particles and may also be responsible for determining the conformation of the 16S rRNA at the A site. In Blochmanniella floridana, this protein is Small ribosomal subunit protein uS14.